A 319-amino-acid polypeptide reads, in one-letter code: Dehydrogenase/reductase SDR family member 9 (319 aa).

The signal sequence occupies residues 1–20; sequence MLLWVLALLFLCAFLWNYKG. NAD(+) contacts are provided by residues 34 to 58 and aspartate 83; that span reads ITGC…RVIA. Substrate is bound at residue serine 164. Tyrosine 176 (proton acceptor) is an active-site residue. Lysine 180 is an NAD(+) binding site.

It belongs to the short-chain dehydrogenases/reductases (SDR) family. As to quaternary structure, homotetramer. As to expression, highly expressed in epithelium of estrus uterus.

It is found in the microsome membrane. The protein resides in the endoplasmic reticulum membrane. The catalysed reaction is 3beta-hydroxy-5alpha-pregnane-20-one + NAD(+) = 5alpha-pregnane-3,20-dione + NADH + H(+). The enzyme catalyses 17beta-hydroxy-5alpha-androstan-3-one + NAD(+) = 5alpha-androstan-3,17-dione + NADH + H(+). It catalyses the reaction androsterone + NAD(+) = 5alpha-androstan-3,17-dione + NADH + H(+). It carries out the reaction 5alpha-androstane-3alpha,17beta-diol + NAD(+) = 17beta-hydroxy-5alpha-androstan-3-one + NADH + H(+). The catalysed reaction is all-trans-retinol + NAD(+) = all-trans-retinal + NADH + H(+). The enzyme catalyses 3alpha-hydroxy-5alpha-pregnan-20-one + NAD(+) = 5alpha-pregnane-3,20-dione + NADH + H(+). Functionally, 3-alpha-hydroxysteroid dehydrogenase that converts 3-alpha-tetrahydroprogesterone (allopregnanolone) to dihydroxyprogesterone and 3-alpha-androstanediol to dihydroxyprogesterone. Plays also role in the biosynthesis of retinoic acid from retinaldehyde. Can utilize both NADH and NADPH. The sequence is that of Dehydrogenase/reductase SDR family member 9 (Dhrs9) from Rattus norvegicus (Rat).